A 150-amino-acid polypeptide reads, in one-letter code: Galactose-binding lectin (150 aa).

Positions 16 and 19 each coordinate D-galactose. Residue N26 is glycosylated (N-linked (GlcNAc...) asparagine). Residues D27, 35 to 37, H64, and G67 each bind D-galactose; that span reads DIH. N74 is a glycosylation site (N-linked (GlcNAc...) asparagine). D-galactose contacts are provided by residues E75, 83 to 85, H108, and G111; that span reads DRH. N-linked (GlcNAc...) asparagine glycosylation is present at N118. D-galactose is bound by residues E119 and 127–129; that span reads DKH.

As to quaternary structure, homodimer. Likely to form large oligomers; oligomerization enhances hemagglutination activity. Post-translationally, glycosylated.

With respect to regulation, hemagglutination activity is not dependent on divalent cations. Hemagglutination activity is highly inhibited by D-galactose and N-acetyl-D-galactosamine, and to a lesser extent by raffinose. Also inhibited by melibiose and alpha-lactose, but not by beta-lactose or D-glucose. Functionally, D-galactose-binding lectin. Also binds N-acetyl-D-galactosamine. Has hemagglutination activity towards all types of human erythrocytes (O, A and B) and rabbit erythrocytes. Agglutinates Gram-negative and Gram-positive bacteria including E.coli DH5-alpha and L.plantarum ATCC8014, respectively, and has bacteriostatic activity against them. Also agglutinates M.lysodeikticus. May be involved in innate immunity by recognizing and eliminating pathogens. The protein is Galactose-binding lectin of Mytilus californianus (California mussel).